Consider the following 439-residue polypeptide: Lipase 1 (439 aa).

Positions 1–24 (MRCSLRMQLLLLLGLCVFISRIQG) are cleaved as a signal peptide. Residues 28 to 60 (GGEEDEEDEEEEEEEEESVEDETPEDRLQRKNI) are disordered. Residues 29–51 (GEEDEEDEEEEEEEEESVEDETP) show a composition bias toward acidic residues. Residues Asn124 and Asn151 are each glycosylated (N-linked (GlcNAc...) asparagine). Catalysis depends on Ser197, which acts as the Charge relay system. Residues Asn346 and Asn379 are each glycosylated (N-linked (GlcNAc...) asparagine). The Charge relay system role is filled by His393. The N-linked (GlcNAc...) asparagine glycan is linked to Asn426.

It belongs to the AB hydrolase superfamily. Lipase family. In terms of tissue distribution, in 14 hours embryos expression is seen in the foregut/midgut boundary.

It localises to the secreted. Functionally, could be a digestive enzyme. In Drosophila melanogaster (Fruit fly), this protein is Lipase 1 (Lip1).